The chain runs to 586 residues: Eukaryotic translation initiation factor 3 subunit D (586 aa).

Disordered stretches follow at residues 16–37 (EDSW…YAPF) and 104–176 (KRTF…REPS). The segment covering 108 to 131 (GRGGGTVFRGRAQRGGAGQRGGRA) has biased composition (gly residues). Positions 162 to 174 (GWKDYDKPQRTRE) are enriched in basic and acidic residues. The segment at 301-315 (SIDLVTVNENAADAP) is RNA gate. The disordered stretch occupies residues 563–586 (ANTFEEDDEAADEQEEKATEESEE). A compositionally biased stretch (acidic residues) spans 566–577 (FEEDDEAADEQE).

This sequence belongs to the eIF-3 subunit D family. Component of the eukaryotic translation initiation factor 3 (eIF-3) complex.

It is found in the cytoplasm. MRNA cap-binding component of the eukaryotic translation initiation factor 3 (eIF-3) complex, which is involved in protein synthesis of a specialized repertoire of mRNAs and, together with other initiation factors, stimulates binding of mRNA and methionyl-tRNAi to the 40S ribosome. The eIF-3 complex specifically targets and initiates translation of a subset of mRNAs involved in cell proliferation. In the eIF-3 complex, eif3d specifically recognizes and binds the 7-methylguanosine cap of a subset of mRNAs. This Aspergillus clavatus (strain ATCC 1007 / CBS 513.65 / DSM 816 / NCTC 3887 / NRRL 1 / QM 1276 / 107) protein is Eukaryotic translation initiation factor 3 subunit D.